An 89-amino-acid chain; its full sequence is uncharacterized protein (89 aa).

The interval 66 to 89 (RIKEQSSSSSATRTTQEPSLHLPD) is disordered.

This is an uncharacterized protein from Cestrum parqui (CmYLCV).